The primary structure comprises 3037 residues: Genome polyprotein (3037 aa).

Ser2 bears the N-acetylserine; by host mark. The segment at 2–23 (STNPKPQRKTKRNTNRRPQDVK) is interaction with STAT1. Residues 2 to 58 (STNPKPQRKTKRNTNRRPQDVKFPGGGQIVGGVYLLPRRGPRLGVRAARKTSERSQP) form an interaction with EIF2AK2/PKR region. The interaction with DDX3X stretch occupies residues 2-59 (STNPKPQRKTKRNTNRRPQDVKFPGGGQIVGGVYLLPRRGPRLGVRAARKTSERSQPR). Positions 2–75 (STNPKPQRKT…PKDRRSTGKS (74 aa)) are disordered. The Cytoplasmic segment spans residues 2–168 (STNPKPQRKT…EDGINYATGN (167 aa)). 2 short sequence motifs (nuclear localization signal) span residues 5–13 (PKPQRKTKR) and 38–43 (PRRGPR). Residues 7–16 (PQRKTKRNTN) are compositionally biased toward basic residues. Residues 32–47 (GGVYLLPRRGPRLGVR) are compositionally biased toward low complexity. Ser53 is subject to Phosphoserine; by host. 2 consecutive short sequence motifs (nuclear localization signal) follow at residues 58-64 (PRGRRQP) and 66-71 (PKDRRS). Phosphoserine; by host occurs at positions 99 and 116. The segment at 112 to 152 (PRHKSRNLGKVIDTLTCGFADLMGYIPVVGAPVGGVARALA) is important for endoplasmic reticulum and mitochondrial localization. Residues 122-173 (VIDTLTCGFADLMGYIPVVGAPVGGVARALAHGVRVLEDGINYATGNLPGCS) are interaction with APOA2. Residues 164 to 167 (YATG) form an important for lipid droplets localization region. A helical membrane pass occupies residues 169–189 (LPGCSFSIFLLALLSCISVPV). Residues 178 to 191 (LLALLSCISVPVSA) constitute a propeptide, ER anchor for the core protein, removed in mature form by host signal peptidase. Over 190 to 358 (SAVEVRNTSS…TGGHWGVMFG (169 aa)) the chain is Lumenal. Asn196, Asn209, and Asn234 each carry an N-linked (GlcNAc...) asparagine; by host glycan. Positions 265 to 296 (IVMSATLCSALYVGDVCGALMIAAQVVVVSPQ) are important for fusion. Residue Asn305 is glycosylated (N-linked (GlcNAc...) asparagine; by host). A helical membrane pass occupies residues 359–379 (LAYFSMQGAWAKVVVILLLTA). At 380–729 (GVEASTYTTG…WEWVVLLFLL (350 aa)) the chain is on the lumenal side. An HVR1 region spans residues 385–412 (TYTTGAVVGRSTHLFTSMFSLGSQQRVQ). 3 N-linked (GlcNAc...) (high mannose) asparagine; by host glycosylation sites follow: Asn417, Asn423, and Asn430. Cystine bridges form between Cys429-Cys554, Cys452-Cys459, Cys488-Cys496, and Cys505-Cys510. N-linked (GlcNAc...) asparagine; by host glycosylation is present at Asn448. The interval 475 to 480 (EESVTN) is HVR2. The segment at 482–495 (ADMRPYCWHYPPRP) is CD81-binding 1. Residue Asn534 is glycosylated (N-linked (GlcNAc...) asparagine; by host). Residues 546–553 (PPKGAWFG) are CD81-binding 2. N-linked (GlcNAc...) asparagine; by host glycosylation occurs at Asn558. Intrachain disulfides connect Cys566–Cys571, Cys585–Cys589, Cys601–Cys624, and Cys611–Cys648. N-linked (GlcNAc...) (high mannose) asparagine; by host glycosylation is found at Asn627 and Asn649. Cys656 and Cys681 are oxidised to a cystine. The interval 664-675 (SQLSPLLHSTTE) is PKR/eIF2-alpha phosphorylation homology domain (PePHD). The helical transmembrane segment at 730–750 (LADARVCACLWMLLLLGQAEA) threads the bilayer. Residues 751 to 761 (ALEKLVILHAA) lie on the Lumenal side of the membrane. A helical transmembrane segment spans residues 762 to 782 (SAASSNGLLYFILFFVAAWCI). Residues 783–786 (KGRA) are Cytoplasmic-facing. A helical membrane pass occupies residues 787 to 807 (VPMVTYTLLGCWSFVLLLMAL). Over 808–817 (PHQAYALDAA) the chain is Lumenal. Residues 818–838 (EQGQIGMALLIAITAFTITPA) traverse the membrane as a helical segment. Residues 839 to 885 (YKILLSRCLWWTCYMLVLAEALIQDWIPPLQARGGRDGVIWAMTMFY) lie on the Cytoplasmic side of the membrane. Residues 886 to 906 (PGVVFDITKWLLAILGPGYLF) traverse the membrane as a helical segment. Residues 905–1030 (LFRAAVMRTP…GYTSKGWRLL (126 aa)) form the Peptidase C18 domain. At 907–932 (RAAVMRTPYFVRANALLRMCALVKQL) the chain is on the lumenal side. A protease NS2-3 region spans residues 908-1210 (AAVMRTPYFV…PVESLDVVTR (303 aa)). Cys926 carries S-palmitoyl cysteine; by host lipidation. Residues 933–953 (AGGKYVQVALITLGKWTGTYI) traverse the membrane as a helical segment. An interaction with host SCPS1 region spans residues 933–953 (AGGKYVQVALITLGKWTGTYI). The Cytoplasmic portion of the chain corresponds to 954–1661 (YDHLSPMSDW…CMQADLEIMT (708 aa)). Residues His956, Glu976, and Cys997 each act as for protease NS2 activity; shared with dimeric partner in the active site. One can recognise a Peptidase S29 domain in the interval 1031–1212 (APITAYAQQT…ESLDVVTRSP (182 aa)). Residues His1087 and Asp1111 each act as charge relay system; for serine protease NS3 activity in the active site. Zn(2+)-binding residues include Cys1127 and Cys1129. Ser1169 serves as the catalytic Charge relay system; for serine protease NS3 activity. 2 residues coordinate Zn(2+): Cys1175 and His1179. The 153-residue stretch at 1221–1373 (PAVPQTYQVG…PNIEEVALGH (153 aa)) folds into the Helicase ATP-binding domain. 1234–1241 (APTGSGKS) is a binding site for ATP. 2 residues coordinate Mg(2+): Ser1241 and Glu1321. Positions 1320–1323 (DECH) match the DECH box motif. Residues 1490–1502 (QRRGRTGRGRLGI) form an RNA-binding region. The chain crosses the membrane as a helical span at residues 1662-1682 (STWVLAGGVLAAVAAYCLATG). Residues 1683-1694 (CVSIIGRIHVNQ) are NS3-binding. Topologically, residues 1683-1809 (CVSIIGRIHV…ALTSPLSTST (127 aa)) are cytoplasmic. Residues 1810-1830 (TILLNIMGGWLASQIAPPAGA) traverse the membrane as a helical segment. The Lumenal portion of the chain corresponds to 1831–1832 (TG). Residues 1833 to 1853 (FVVSGLVGAAVGSIGLGKILV) form a helical membrane-spanning segment. Asp1854 is a topological domain (cytoplasmic). Residues 1855 to 1875 (VLAGYGAGISGALVAFKIMSG) traverse the membrane as a helical segment. Topologically, residues 1876-1885 (EKPSVEDVVN) are lumenal. A helical membrane pass occupies residues 1886-1906 (LLPAILSPGALVVGVICAAIL). Topologically, residues 1907 to 1976 (RRHVGQGEGA…WITEDCPVPC (70 aa)) are cytoplasmic. Cys1976 is lipidated: S-palmitoyl cysteine; by host. The stretch at 1977 to 2006 (SGSWLRDVWDWVCSILIDFKNWLSAKLFPR) is an intramembrane region. Residues 2007–3016 (LPGIPFISCQ…YHSVSRARPR (1010 aa)) are Cytoplasmic-facing. 4 residues coordinate Zn(2+): Cys2015, Cys2033, Cys2035, and Cys2056. The tract at residues 2124–2212 (EFFSWVDGVQ…ASSSASQLSA (89 aa)) is FKBP8-binding. Residues 2124 to 2336 (EFFSWVDGVQ…PVPPPRRRRA (213 aa)) form a transcriptional activation region. An interaction with non-structural protein 4A region spans residues 2139–2143 (PTPKA). Positions 2193-2464 (RLARGSPPSA…ALITPCSPEE (272 aa)) are interaction with host SKP2. 6 positions are modified to phosphoserine; by host: Ser2198, Ser2201, Ser2205, Ser2208, Ser2211, and Ser2214. Residues 2214-2253 (SLRATCTTHAKCPDIDMVDANLFCWCTMGGNMTRIESESK) are ISDR. Positions 2214-2279 (SLRATCTTHA…REPSIPSEYL (66 aa)) are interaction with EIF2AK2/PKR. Residues 2253-2310 (KVLMVDSFDPVVDKEDEREPSIPSEYLLPKSRFPPALPPWARPDYNPPLLETWKRPDY) are NS4B-binding. Residues 2303–2381 (ETWKRPDYQP…GTTGETSKSP (79 aa)) form a V3 region. The short motif at 2326 to 2329 (TPVP) is the SH3-binding element. The short motif at 2331–2339 (PRRRRAVVL) is the Nuclear localization signal element. Lys2354 is covalently cross-linked (Glycyl lysine isopeptide (Lys-Gly) (interchain with G-Cter in ubiquitin)). A disordered region spans residues 2354-2434 (KSFGCPPPSG…APGSDSGSWS (81 aa)). Residues 2402 to 2411 (EPGDPDLEPE) are compositionally biased toward acidic residues. Residues Ser2475 and Ser2488 each carry the phosphoserine; by host modification. The RdRp catalytic domain occupies 2660–2778 (PMGFSYDTRC…ISESQGVEED (119 aa)). Mg(2+) contacts are provided by Asp2666, Asp2764, and Asp2765. Residues 3017 to 3037 (LLLLGLLLLCVGVGIFLLPAR) traverse the membrane as a helical segment.

Belongs to the hepacivirus polyprotein family. In terms of assembly, homooligomer. Interacts with E1 (via C-terminus). Interacts with the non-structural protein 5A. Interacts (via N-terminus) with host STAT1 (via SH2 domain); this interaction results in decreased STAT1 phosphorylation and ubiquitin-mediated proteasome-dependent STAT1 degradation, leading to decreased IFN-stimulated gene transcription. Interacts with host STAT3; this interaction constitutively activates STAT3. Interacts with host LTBR receptor. Interacts with host TNFRSF1A receptor and possibly induces apoptosis. Interacts with host HNRPK. Interacts with host YWHAE. Interacts with host UBE3A/E6AP. Interacts with host DDX3X. Interacts with host APOA2. Interacts with host RXRA protein. Interacts with host SP110 isoform 3/Sp110b; this interaction sequesters the transcriptional corepressor SP110 away from the nucleus. Interacts with host CREB3 nuclear transcription protein; this interaction triggers cell transformation. Interacts with host ACY3. Interacts with host C1QR1. Interacts with host RBM24; this interaction, which enhances the interaction of the mature core protein with 5'-UTR, may inhibit viral translation and favor replication. Interacts with host EIF2AK2/PKR; this interaction induces the autophosphorylation of EIF2AK2. Part of the viral assembly initiation complex composed of NS2, E1, E2, NS3, NS4A, NS5A and the mature core protein. Forms a heterodimer with envelope glycoprotein E2. Interacts with mature core protein. Interacts with protease NS2. The heterodimer E1/E2 interacts with host CLDN1; this interaction plays a role in viral entry into host cell. Interacts with host SPSB2 (via C-terminus). Part of the viral assembly initiation complex composed of NS2, E1, E2, NS3, NS4A, NS5A and the mature core protein. Interacts with host NEURL3; this interaction prevents E1 binding to glycoprotein E2. As to quaternary structure, forms a heterodimer with envelope glycoprotein E1. Interacts with host CD81 and SCARB1 receptors; these interactions play a role in viral entry into host cell. Interacts with host EIF2AK2/PKR; this interaction inhibits EIF2AK2 and probably allows the virus to evade the innate immune response. Interacts with host CD209/DC-SIGN and CLEC4M/DC-SIGNR. Interact with host SPCS1; this interaction is essential for viral particle assembly. Interacts with protease NS2. The heterodimer E1/E2 interacts with host CLDN1; this interaction plays a role in viral entry into host cell. Part of the viral assembly initiation complex composed of NS2, E1, E2, NS3, NS4A, NS5A and the mature core protein. Interacts with host SLC3A2/4F2hc; the interaction may facilitate viral entry into host cell. Interacts with human PLSCR1. In terms of assembly, homohexamer. Homoheptamer. Interacts with protease NS2. Homodimer. Interacts with host SPCS1; this interaction is essential for viral particle assembly. Interacts with envelope glycoprotein E1. Interacts with envelope glycoprotein E2. Interacts with viroporin p7. Interacts with serine protease/helicase NS3. Part of the replication complex composed of NS2, NS3, NS4A, NS4B, NS5A and the RNA-directed RNA polymerase embedded in an ER-derived membranous web. Part of the viral assembly initiation complex composed of NS2, E1, E2, NS3, NS4A, NS5A and the mature core protein. As to quaternary structure, interacts with protease NS2. Interacts with non-structural protein 4A; this interaction stabilizes the folding of NS3 serine protease. NS3-NS4A interaction is essential for NS3 activation and allows membrane anchorage of the latter. NS3/NS4A complex also prevents phosphorylation of host IRF3, thus preventing the establishment of dsRNA induced antiviral state. Interacts with host MAVS; this interaction leads to the cleavage and inhibition of host MAVS. Interacts with host TICAM1; this interaction leads to the cleavage and inhibition of host TICAM1. Interacts with host TANK-binding kinase/TBK1; this interaction results in the inhibition of the association between TBK1 and IRF3, which leads to the inhibition of IRF3 activation. Interacts with host RBM24. Part of the replication complex composed of NS2, NS3, NS4A, NS4B, NS5A and the RNA-directed RNA polymerase embedded in an ER-derived membranous web. Part of the viral assembly initiation complex composed of NS2, E1, E2, NS3, NS4A, NS5A and the mature core protein. In terms of assembly, interacts with NS3 serine protease; this interaction stabilizes the folding of NS3 serine protease. NS3-NS4A interaction is essential for NS3 activation and allows membrane anchorage of the latter. Interacts with non-structural protein 5A (via N-terminus). Part of the replication complex composed of NS2, NS3, NS4A, NS4B, NS5A and the RNA-directed RNA polymerase embedded in an ER-derived membranous web. Part of the viral assembly initiation complex composed of NS2, E1, E2, NS3, NS4A, NS5A and the mature core protein. Homomultimer. Interacts with non-structural protein NS5A. Interacts with host PLA2G4C; this interaction likely initiates the recruitment of replication complexes to lipid droplets. Interacts with host STING; this interaction disrupts the interaction between STING and TBK1 thereby suppressing the interferon signaling. Part of the replication complex composed of NS2, NS3, NS4A, NS4B, NS5A and the RNA-directed RNA polymerase embedded in an ER-derived membranous web. As to quaternary structure, monomer. Homodimer; dimerization is required for RNA-binding. Interacts with the mature core protein. Interacts (via N-terminus) with non-structural protein 4A. Interacts with non-structural protein 4B. Interacts (via region D2) with RNA-directed RNA polymerase. Part of the viral assembly initiation complex composed of NS2, E1, E2, NS3, NS4A, NS5A and the mature core protein. Part of the replication complex composed of NS2, NS3, NS4A, NS4B, NS5A and the RNA-directed RNA polymerase embedded in an ER-derived membranous web. Interacts with host GRB2. Interacts with host BIN1. Interacts with host PIK3R1. Interacts with host SRCAP. Interacts with host FKBP8. Interacts (via C-terminus) with host VAPB (via MSP domain). Interacts with host EIF2AK2/PKR; this interaction leads to disruption of EIF2AK2 dimerization by NS5A and probably allows the virus to evade the innate immune response. Interacts (via N-terminus) with host PACSIN2 (via N-terminus); this interaction attenuates protein kinase C alpha-mediated phosphorylation of PACSIN2 by disrupting the interaction between PACSIN2 and PRKCA. Interacts (via N-terminus) with host SRC kinase (via SH2 domain). Interacts with most Src-family kinases. Interacts with host IFI27 and SKP2; promotes the ubiquitin-mediated proteasomal degradation of NS5A. Interacts with host GPS2. Interacts with host TNFRSF21; this interaction allows the modulation by the virus of JNK, p38 MAPK, STAT3, and Akt signaling pathways in a DR6-dependent manner. Interacts (via N-terminus) with host CIDEB (via N-terminus); this interaction seems to regulate the association of HCV particles with APOE. Interacts with host CHKA/Choline Kinase-alpha; CHKA bridges host PI4KA and NS5A and potentiates NS5A-stimulated PI4KA activity, which then facilitates the targeting of the ternary complex to the ER for viral replication. Interacts with host SPSB2 (via C-terminus); this interaction targets NS5A for ubiquitination and degradation. Interacts with host RAB18; this interaction may promote the association of NS5A and other replicase components with lipid droplets. Interacts (via region D2) with host PPIA/CYPA; the interaction stimulates RNA-binding ability of NS5A and is dependent on the peptidyl-prolyl cis-trans isomerase activity of PPIA/CYPA. Interacts with host TRIM14; this interaction induces the degradation of NS5A. In terms of assembly, homooligomer. Interacts with non-structural protein 5A. Interacts with host VAPB. Interacts with host PRK2/PKN2. Interacts with host HNRNPA1 and SEPT6; these interactions facilitate viral replication. Part of the replication complex composed of NS2, NS3, NS4A, NS4B, NS5A and the RNA-directed RNA polymerase. Zn(2+) serves as cofactor. Mg(2+) is required as a cofactor. Post-translationally, specific enzymatic cleavages in vivo yield mature proteins. The structural proteins, core, E1, E2 and p7 are produced by proteolytic processing by host signal peptidases. The core protein precursor is synthesized as a 23 kDa, which is retained in the ER membrane through the hydrophobic signal peptide. Cleavage by the signal peptidase releases the 21 kDa mature core protein. The cleavage of the core protein precursor occurs between aminoacids 176 and 188 but the exact cleavage site is not known. Some degraded forms of the core protein appear as well during the course of infection. The other proteins (p7, NS2, NS3, NS4A, NS4B, NS5A and NS5B) are cleaved by the viral proteases. Autoprocessing between NS2 and NS3 is mediated by the NS2 cysteine protease catalytic domain and regulated by the NS3 N-terminal domain. In terms of processing, phosphorylated by host PKC and PKA. Ubiquitinated; mediated by UBE3A and leading to core protein subsequent proteasomal degradation. Post-translationally, highly N-glycosylated. In terms of processing, palmitoylation is required for NS2/3 autoprocessing and E2 recruitment to membranes. Palmitoylated. This modification may play a role in its polymerization or in protein-protein interactions. Post-translationally, phosphorylated on serines in a basal form termed p56. p58 is a hyperphosphorylated form of p56. p56 and p58 coexist in the cell in roughly equivalent amounts. Hyperphosphorylation is dependent on the presence of NS4A. Host CSNK1A1/CKI-alpha or RPS6KB1 kinases may be responsible for NS5A phosphorylation. In terms of processing, tyrosine phosphorylation is essential for the interaction with host SRC. The N-terminus is phosphorylated by host PRK2/PKN2.

It is found in the host endoplasmic reticulum membrane. It localises to the host mitochondrion membrane. The protein resides in the virion. The protein localises to the host cytoplasm. Its subcellular location is the host nucleus. It is found in the host lipid droplet. It localises to the virion membrane. The protein resides in the host mitochondrion. The protein localises to the host cell membrane. Its subcellular location is the host perinuclear region. The catalysed reaction is Hydrolysis of four peptide bonds in the viral precursor polyprotein, commonly with Asp or Glu in the P6 position, Cys or Thr in P1 and Ser or Ala in P1'.. It catalyses the reaction a ribonucleoside 5'-triphosphate + H2O = a ribonucleoside 5'-diphosphate + phosphate + H(+). The enzyme catalyses ATP + H2O = ADP + phosphate + H(+). It carries out the reaction RNA(n) + a ribonucleoside 5'-triphosphate = RNA(n+1) + diphosphate. Its activity is regulated as follows. Inhibited by the antiviral drug hexamethylene amiloride. Inhibition by amantadine appears to be genotype-dependent. Also inhibited by long-alkyl-chain iminosugar derivatives. Activity is up-regulated by PRK2/PKN2-mediated phosphorylation. Packages viral RNA to form a viral nucleocapsid, and promotes virion budding. Participates in the viral particle production as a result of its interaction with the non-structural protein 5A. Binds RNA and may function as a RNA chaperone to induce the RNA structural rearrangements taking place during virus replication. Modulates viral translation initiation by interacting with viral IRES and 40S ribosomal subunit. Affects various cell signaling pathways, host immunity and lipid metabolism. Prevents the establishment of cellular antiviral state by blocking the interferon-alpha/beta (IFN-alpha/beta) and IFN-gamma signaling pathways and by blocking the formation of phosphorylated STAT1 and promoting ubiquitin-mediated proteasome-dependent degradation of STAT1. Activates STAT3 leading to cellular transformation. Regulates the activity of cellular genes, including c-myc and c-fos. May repress the promoter of p53, and sequester CREB3 and SP110 isoform 3/Sp110b in the cytoplasm. Represses cell cycle negative regulating factor CDKN1A, thereby interrupting an important check point of normal cell cycle regulation. Targets transcription factors involved in the regulation of inflammatory responses and in the immune response: suppresses TNF-induced NF-kappa-B activation, and activates AP-1. Binds to dendritic cells (DCs) via C1QR1, resulting in down-regulation of T-lymphocytes proliferation. Alters lipid metabolism by interacting with hepatocellular proteins involved in lipid accumulation and storage. Induces up-regulation of FAS promoter activity, and thereby contributes to the increased triglyceride accumulation in hepatocytes (steatosis). Its function is as follows. Forms a heterodimer with envelope glycoprotein E2, which mediates virus attachment to the host cell, virion internalization through clathrin-dependent endocytosis and fusion with host membrane. Fusion with the host cell is most likely mediated by both E1 and E2, through conformational rearrangements of the heterodimer required for fusion rather than a classical class II fusion mechanism. E1/E2 heterodimer binds host apolipoproteins such as APOB and ApoE thereby forming a lipo-viro-particle (LVP). APOE associated to the LVP allows the initial virus attachment to cell surface receptors such as the heparan sulfate proteoglycans (HSPGs), syndecan-1 (SDC1), syndecan-1 (SDC2), the low-density lipoprotein receptor (LDLR) and scavenger receptor class B type I (SCARB1). The cholesterol transfer activity of SCARB1 allows E2 exposure and binding of E2 to SCARB1 and the tetraspanin CD81. E1/E2 heterodimer binding on CD81 activates the epithelial growth factor receptor (EGFR) signaling pathway. Diffusion of the complex E1-E2-EGFR-SCARB1-CD81 to the cell lateral membrane allows further interaction with Claudin 1 (CLDN1) and occludin (OCLN) to finally trigger HCV entry. Functionally, forms a heterodimer with envelope glycoprotein E1, which mediates virus attachment to the host cell, virion internalization through clathrin-dependent endocytosis and fusion with host membrane. Fusion with the host cell is most likely mediated by both E1 and E2, through conformational rearrangements of the heterodimer required for fusion rather than a classical class II fusion mechanism. The interaction between envelope glycoprotein E2 and host apolipoprotein E/APOE allows the proper assembly, maturation and infectivity of the viral particles. This interaction is probably promoted via the up-regulation of cellular autophagy by the virus. E1/E2 heterodimer binds host apolipoproteins such as APOB and APOE thereby forming a lipo-viro-particle (LVP). APOE associated to the LVP allows the initial virus attachment to cell surface receptors such as the heparan sulfate proteoglycans (HSPGs), syndecan-1 (SDC1), syndecan-1 (SDC2), the low-density lipoprotein receptor (LDLR) and scavenger receptor class B type I (SCARB1). The cholesterol transfer activity of SCARB1 allows E2 exposure and binding of E2 to SCARB1 and the tetraspanin CD81. E1/E2 heterodimer binding on CD81 activates the epithelial growth factor receptor (EGFR) signaling pathway. Diffusion of the complex E1-E2-EGFR-SCARB1-CD81 to the cell lateral membrane allows further interaction with Claudin 1 (CLDN1) and occludin (OCLN) to finally trigger HCV entry. Inhibits host EIF2AK2/PKR activation, preventing the establishment of an antiviral state. Viral ligand for CD209/DC-SIGN and CLEC4M/DC-SIGNR, which are respectively found on dendritic cells (DCs), and on liver sinusoidal endothelial cells and macrophage-like cells of lymph node sinuses. These interactions allow the capture of circulating HCV particles by these cells and subsequent facilitated transmission to permissive cells such as hepatocytes and lymphocyte subpopulations. The interaction between E2 and host amino acid transporter complex formed by SLC3A2 and SLC7A5/LAT1 may facilitate viral entry into host cell. In terms of biological role, ion channel protein that acts as a viroporin and plays an essential role in the assembly, envelopment and secretion of viral particles. Regulates the host cell secretory pathway, which induces the intracellular retention of viral glycoproteins and favors assembly of viral particles. Creates a pore in acidic organelles and releases Ca(2+) and H(+) in the cytoplasm of infected cells, leading to a productive viral infection. High levels of cytoplasmic Ca(2+) may trigger membrane trafficking and transport of viral ER-associated proteins to viroplasms, sites of viral genome replication. This ionic imbalance induces the assembly of the inflammasome complex, which triggers the maturation of pro-IL-1beta into IL-1beta through the action of caspase-1. Targets also host mitochondria and induces mitochondrial depolarization. In addition of its role as a viroporin, acts as a lipid raft adhesion factor. Cysteine protease required for the proteolytic auto-cleavage between the non-structural proteins NS2 and NS3. The N-terminus of NS3 is required for the function of NS2 protease (active region NS2-3). Promotes the initiation of viral particle assembly by mediating the interaction between structural and non-structural proteins. Its function is as follows. Displays three enzymatic activities: serine protease with a chymotrypsin-like fold, NTPase and RNA helicase. NS3 serine protease, in association with NS4A, is responsible for the cleavages of NS3-NS4A, NS4A-NS4B, NS4B-NS5A and NS5A-NS5B. The NS3/NS4A complex prevents phosphorylation of host IRF3, thus preventing the establishment of dsRNA induced antiviral state. The NS3/NS4A complex induces host amino acid transporter component SLC3A2, thus contributing to HCV propagation. NS3 RNA helicase binds to RNA and unwinds both dsDNA and dsRNA in the 3' to 5' direction, and likely resolves RNA complicated stable secondary structures in the template strand. Binds a single ATP and catalyzes the unzipping of a single base pair of dsRNA. Inhibits host antiviral proteins TBK1 and IRF3 thereby preventing the establishment of an antiviral state. Cleaves host MAVS/CARDIF thereby preventing the establishment of an antiviral state. Cleaves host TICAM1/TRIF, thereby disrupting TLR3 signaling and preventing the establishment of an antiviral state. Functionally, induces a specific membrane alteration that serves as a scaffold for the virus replication complex. This membrane alteration gives rise to the so-called ER-derived membranous web that contains the replication complex. NS4B self-interaction contributes to its function in membranous web formation. Promotes host TRIF protein degradation in a CASP8-dependent manner thereby inhibiting host TLR3-mediated interferon signaling. Disrupts the interaction between STING and TBK1 contributing to the inhibition of interferon signaling. In terms of biological role, phosphorylated protein that is indispensable for viral replication and assembly. Both hypo- and hyperphosphorylated states are required for the viral life cycle. The hyperphosphorylated form of NS5A is an inhibitor of viral replication. Involved in RNA-binding and especially in binding to the viral genome. Zinc is essential for RNA-binding. Participates in the viral particle production as a result of its interaction with the mature viral core protein. Its interaction with host VAPB may target the viral replication complex to vesicles. Down-regulates viral IRES translation initiation. Mediates interferon resistance, presumably by interacting with and inhibiting host EIF2AK2/PKR. Prevents BIN1-induced apoptosis. Acts as a transcriptional activator of some host genes important for viral replication when localized in the nucleus. Via the interaction with host PACSIN2, modulates lipid droplet formation in order to promote virion assembly. Modulates TNFRSF21/DR6 signaling pathway for viral propagation. RNA-dependent RNA polymerase that performs primer-template recognition and RNA synthesis during viral replication. Initiates RNA transcription/replication at a flavin adenine dinucleotide (FAD), resulting in a 5'- FAD cap on viral RNAs. In this way, recognition of viral 5' RNA by host pattern recognition receptors can be bypassed, thereby evading activation of antiviral pathways. This is Genome polyprotein from Hepatitis C virus genotype 2c (isolate BEBE1) (HCV).